A 1502-amino-acid chain; its full sequence is Leucine-rich repeat-containing protein 9 (1502 aa).

29 LRR repeats span residues 53 to 79, 97 to 119, 120 to 141, 142 to 164, 166 to 188, 224 to 247, 296 to 320, 699 to 721, 722 to 744, 746 to 764, 765 to 790, 792 to 814, 822 to 849, 894 to 916, 917 to 938, 939 to 960, 961 to 983, 985 to 1009, 1011 to 1030, 1031 to 1053, 1100 to 1123, 1124 to 1146, 1147 to 1170, 1209 to 1232, 1234 to 1255, 1256 to 1278, 1280 to 1301, 1302 to 1325, and 1327 to 1351; these read FPNL…HFLK, CADL…LENL, LKLE…LDMM, QNLK…LDPN, QLER…NLAR, LQRL…TVVK, EHEL…KFHE, YSQI…ISRL, NGLR…SYLT, LEYL…GFKG, LGKL…ILRK, AIQL…VLKD, LTHL…RITQ, YTKI…LEKL, VNLR…LEHC, VNLE…LSKL, TKLR…VIES, SHLH…GYKL, ELYL…SLKG, LNNL…NYRL, FTEL…PADH, FRNV…LIFL, PNIK…KSQS, MQSL…QLGR, RNLK…LENL, QFLR…SFAK, NSLV…LPPL, LKLR…KLEV, and PALV…LLVV. Residues 317–342 are disordered; the sequence is KFHENNCDTEESNSQQSSERRKNNSD. Positions 1479–1496 are enriched in polar residues; it reads TQQSGQARSQQKHPFNQE. Residues 1479-1502 form a disordered region; that stretch reads TQQSGQARSQQKHPFNQENEGRCV.

This chain is Leucine-rich repeat-containing protein 9 (lrrc9), found in Xenopus tropicalis (Western clawed frog).